The sequence spans 117 residues: Gamma-aminobutyric acid receptor-associated protein-like 1 (117 aa).

The Phosphatidylethanolamine amidated glycine; alternate moiety is linked to residue glycine 116. Glycine 116 carries Phosphatidylserine amidated glycine; alternate lipidation. Lysine 117 is a propeptide (removed in mature form).

Belongs to the ATG8 family. As to quaternary structure, interacts with ATG13, OPRK1, RB1CC1 and ULK1. Interacts with TP53INP1 and TP53INP2. Directly interacts with SQSTM1. Interacts with ATG3, ATG7 and MAP15. Interacts with TECPR2. Interacts with TBC1D5. Interacts with MAPK15. Interacts with TRIM5. Interacts with MEFV and TRIM21. Interacts with WDFY3. Interacts with the reticulophagy receptor TEX264. Interacts with UBA5. Interacts with KBTBD6 and KBTBD7; the interaction is direct. Interacts with reticulophagy regulators RETREG1, RETREG2 and RETREG3. Interacts with IRGM. Interacts with DNM2. Interacts with NCOA4 (via C-terminus). The precursor molecule is cleaved by ATG4 (ATG4A, ATG4B, ATG4C or ATG4D) to expose the glycine at the C-terminus and form the cytosolic form, GABARAPL1-I. The processed form is then activated by APG7L/ATG7, transferred to ATG3 and conjugated to phosphatidylethanolamine (PE) phospholipid to form the membrane-bound form, GABARAPL1-II. During non-canonical autophagy, the processed form is conjugated to phosphatidylserine (PS) phospholipid. ATG4 proteins also mediate the delipidation of PE-conjugated forms required for GABARAPL1 recycling when autophagosomes fuse with lysosomes. In addition, ATG4B and ATG4D mediate delipidation of ATG8 proteins conjugated to PS during non-canonical autophagy. ATG4B constitutes the major protein for proteolytic activation. ATG4D is the main enzyme for delipidation activity.

The protein resides in the cytoplasmic vesicle. It is found in the autophagosome. It localises to the cytoplasmic vesicle membrane. Its subcellular location is the cytoplasm. The protein localises to the cytoskeleton. The protein resides in the endoplasmic reticulum. It is found in the golgi apparatus. Ubiquitin-like modifier that increases cell-surface expression of kappa-type opioid receptor through facilitating anterograde intracellular trafficking of the receptor. Involved in formation of autophagosomal vacuoles. While LC3s are involved in elongation of the phagophore membrane, the GABARAP/GATE-16 subfamily is essential for a later stage in autophagosome maturation. Through its interaction with the reticulophagy receptor TEX264, participates in the remodeling of subdomains of the endoplasmic reticulum into autophagosomes upon nutrient stress, which then fuse with lysosomes for endoplasmic reticulum turnover. This Bos taurus (Bovine) protein is Gamma-aminobutyric acid receptor-associated protein-like 1.